The sequence spans 1407 residues: MKDLLKFLKAQTKTEEFDAIKIALASPDMIRSWSFGEVKKPETINYRTFKPERDGLFCARIFGPVKDYECLCGKYKRLKHRGVICEKCGVEVTQTKVRRERMGHIELASPTAHIWFLKSLPSRIGLLLDMPLRDIERVLYFESYVVIEGGMTNLERQQILTEEQYLDALEEFGDEFDAKMGAEAIQALLKSMDLEQECETLREELNETNSETKRKKLTKRIKLLEAFVQSGNKPEWMILTVLPVLPPDLRPLVPLDGGRFATSDLNDLYRRVINRNNRLKRLLDLAAPDIIVRNEKRMLQEAVDALLDNGRRGRAITGSNKRPLKSLADMIKGKQGRFRQNLLGKRVDYSGRSVITVGPYLRLHQCGLPKKMALELFKPFIYGKLELRGLATTIKAAKKMVEREEAVVWDILDEVIREHPVLLNRAPTLHRLGIQAFEPVLIEGKAIQLHPLVCAAYNADFDGDQMAVHVPLTLEAQLEARALMMSTNNILSPANGEPIIVPSQDVVLGLYYMTRDCVNAKGEGMVLTGPKEAERIYRAGLASLHARVKVRITEYEKDENGEFVAHTSLKDTTVGRAILWMIVPKGLPFSIVNQALGKKAISKMLNTCYRILGLKPTVIFADQTMYTGFAYAARSGASVGIDDMVIPEKKHEIISEAEAEVAEIQEQFQSGLVTAGERYNKVIDIWAAANDRVSKAMMDNLQTETVINRDGQEEQQVSFNSIYMMADSGARGSAAQIRQLAGMRGLMAKPDGSIIETPITANFREGLNVLQYFISTHGARKGLADTALKTANSGYLTRRLVDVAQDLVVTEDDCGTHEGILMTPVIEGGDVKEPLRDRVLGRVTAEDVLKPGTADILVPRNTLLHEQWCDLLEANSVDAVKVRSVVSCDTDFGVCAHCYGRDLARGHIINKGEAIGVIAAQSIGEPGTQLTMRTFHIGGAASRAAAESSIQVKNKGSIKLSNVKSVVNSSGKLVITSRNTELKLIDEFGRTKESYKVPYGAVMAKGDGEQVAGGETVANWDPHTMPVITEVSGFIRFTDMIDGQTITRQTDELTGLSSLVVLDSAERTTGGKDLRPALKIVDAQGNDVLIPGTDMPAQYFLPGKAIVQLEDGVQISSGDTLARIPQESGGTKDITGGLPRVADLFEARRPKEPAILAEIAGIVSFGKETKGKRRLVITPVDGSDPYEEMIPKWRQLNVFEGERVERGDVISDGPEAPHDILRLRGVHAVTRYIVNEVQDVYRLQGVKINDKHIEVIVRQMLRKATIESAGSSDFLEGEQVEYSRVKIANRELEANGKVGATFSRDLLGITKASLATESFISAASFQETTRVLTEAAVAGKRDELRGLKENVIVGRLIPAGTGYAYHQDRMRRRAAGEQPATPQVTAEDASASLAELLNAGLGGSDNE.

Zn(2+) contacts are provided by Cys-70, Cys-72, Cys-85, and Cys-88. Mg(2+) is bound by residues Asp-460, Asp-462, and Asp-464. Zn(2+) is bound by residues Cys-814, Cys-888, Cys-895, and Cys-898.

It belongs to the RNA polymerase beta' chain family. In terms of assembly, the RNAP catalytic core consists of 2 alpha, 1 beta, 1 beta' and 1 omega subunit. When a sigma factor is associated with the core the holoenzyme is formed, which can initiate transcription. The cofactor is Mg(2+). Zn(2+) serves as cofactor.

It catalyses the reaction RNA(n) + a ribonucleoside 5'-triphosphate = RNA(n+1) + diphosphate. In terms of biological role, DNA-dependent RNA polymerase catalyzes the transcription of DNA into RNA using the four ribonucleoside triphosphates as substrates. In Salmonella choleraesuis (strain SC-B67), this protein is DNA-directed RNA polymerase subunit beta'.